The following is a 119-amino-acid chain: NAD(P)H-quinone oxidoreductase subunit M (119 aa).

The protein belongs to the complex I NdhM subunit family. As to quaternary structure, NDH-1 can be composed of about 15 different subunits; different subcomplexes with different compositions have been identified which probably have different functions.

Its subcellular location is the cell inner membrane. It carries out the reaction a plastoquinone + NADH + (n+1) H(+)(in) = a plastoquinol + NAD(+) + n H(+)(out). It catalyses the reaction a plastoquinone + NADPH + (n+1) H(+)(in) = a plastoquinol + NADP(+) + n H(+)(out). NDH-1 shuttles electrons from an unknown electron donor, via FMN and iron-sulfur (Fe-S) centers, to quinones in the respiratory and/or the photosynthetic chain. The immediate electron acceptor for the enzyme in this species is believed to be plastoquinone. Couples the redox reaction to proton translocation, and thus conserves the redox energy in a proton gradient. Cyanobacterial NDH-1 also plays a role in inorganic carbon-concentration. The chain is NAD(P)H-quinone oxidoreductase subunit M from Gloeobacter violaceus (strain ATCC 29082 / PCC 7421).